Reading from the N-terminus, the 342-residue chain is Holliday junction branch migration complex subunit RuvB (342 aa).

Residues 1 to 185 (MREDYLKSDD…FGINARLEYY (185 aa)) form a large ATPase domain (RuvB-L) region. Residues leucine 24, arginine 25, glycine 66, lysine 69, threonine 70, threonine 71, 132–134 (EDY), arginine 175, tyrosine 185, and arginine 222 contribute to the ATP site. Threonine 70 contributes to the Mg(2+) binding site. A small ATPAse domain (RuvB-S) region spans residues 186-256 (DAKLLTRIVQ…IARIALQALN (71 aa)). The segment at 259–342 (HNGLDDMDNR…PPAQSGTLFE (84 aa)) is head domain (RuvB-H). DNA is bound by residues arginine 314 and arginine 319.

It belongs to the RuvB family. Homohexamer. Forms an RuvA(8)-RuvB(12)-Holliday junction (HJ) complex. HJ DNA is sandwiched between 2 RuvA tetramers; dsDNA enters through RuvA and exits via RuvB. An RuvB hexamer assembles on each DNA strand where it exits the tetramer. Each RuvB hexamer is contacted by two RuvA subunits (via domain III) on 2 adjacent RuvB subunits; this complex drives branch migration. In the full resolvosome a probable DNA-RuvA(4)-RuvB(12)-RuvC(2) complex forms which resolves the HJ.

Its subcellular location is the cytoplasm. It carries out the reaction ATP + H2O = ADP + phosphate + H(+). In terms of biological role, the RuvA-RuvB-RuvC complex processes Holliday junction (HJ) DNA during genetic recombination and DNA repair, while the RuvA-RuvB complex plays an important role in the rescue of blocked DNA replication forks via replication fork reversal (RFR). RuvA specifically binds to HJ cruciform DNA, conferring on it an open structure. The RuvB hexamer acts as an ATP-dependent pump, pulling dsDNA into and through the RuvAB complex. RuvB forms 2 homohexamers on either side of HJ DNA bound by 1 or 2 RuvA tetramers; 4 subunits per hexamer contact DNA at a time. Coordinated motions by a converter formed by DNA-disengaged RuvB subunits stimulates ATP hydrolysis and nucleotide exchange. Immobilization of the converter enables RuvB to convert the ATP-contained energy into a lever motion, pulling 2 nucleotides of DNA out of the RuvA tetramer per ATP hydrolyzed, thus driving DNA branch migration. The RuvB motors rotate together with the DNA substrate, which together with the progressing nucleotide cycle form the mechanistic basis for DNA recombination by continuous HJ branch migration. Branch migration allows RuvC to scan DNA until it finds its consensus sequence, where it cleaves and resolves cruciform DNA. The chain is Holliday junction branch migration complex subunit RuvB from Cytophaga hutchinsonii (strain ATCC 33406 / DSM 1761 / CIP 103989 / NBRC 15051 / NCIMB 9469 / D465).